Reading from the N-terminus, the 103-residue chain is Small ribosomal subunit protein uS10 (103 aa).

Belongs to the universal ribosomal protein uS10 family. Part of the 30S ribosomal subunit.

Involved in the binding of tRNA to the ribosomes. This Shewanella halifaxensis (strain HAW-EB4) protein is Small ribosomal subunit protein uS10.